Consider the following 479-residue polypeptide: Aspartyl/glutamyl-tRNA(Asn/Gln) amidotransferase subunit B (479 aa).

It belongs to the GatB/GatE family. GatB subfamily. Heterotrimer of A, B and C subunits.

It carries out the reaction L-glutamyl-tRNA(Gln) + L-glutamine + ATP + H2O = L-glutaminyl-tRNA(Gln) + L-glutamate + ADP + phosphate + H(+). It catalyses the reaction L-aspartyl-tRNA(Asn) + L-glutamine + ATP + H2O = L-asparaginyl-tRNA(Asn) + L-glutamate + ADP + phosphate + 2 H(+). Allows the formation of correctly charged Asn-tRNA(Asn) or Gln-tRNA(Gln) through the transamidation of misacylated Asp-tRNA(Asn) or Glu-tRNA(Gln) in organisms which lack either or both of asparaginyl-tRNA or glutaminyl-tRNA synthetases. The reaction takes place in the presence of glutamine and ATP through an activated phospho-Asp-tRNA(Asn) or phospho-Glu-tRNA(Gln). The protein is Aspartyl/glutamyl-tRNA(Asn/Gln) amidotransferase subunit B of Streptococcus pyogenes serotype M28 (strain MGAS6180).